Here is a 226-residue protein sequence, read N- to C-terminus: Ribosomal RNA small subunit methyltransferase G (226 aa).

S-adenosyl-L-methionine is bound by residues Gly95, Leu100, 146–147, and Arg159; that span reads VE.

The protein belongs to the methyltransferase superfamily. RNA methyltransferase RsmG family.

The protein localises to the cytoplasm. The catalysed reaction is guanosine(527) in 16S rRNA + S-adenosyl-L-methionine = N(7)-methylguanosine(527) in 16S rRNA + S-adenosyl-L-homocysteine. Specifically methylates the N7 position of guanine in position 527 of 16S rRNA. This Acidovorax sp. (strain JS42) protein is Ribosomal RNA small subunit methyltransferase G.